Consider the following 369-residue polypeptide: MAVSLPLVFTAPRRGMPPKHLADLDSTERREAVKELGLPGFRADQLARQYYARLEADPEKMTDLPAAVREQVGAALFPTLLTAVKHLACDGGDTRKTLWKANDGTLLESVLMRYPDRATLCISSQAGCGMACPFCATGQGGLQRNLSTAEIVDQVRAAAAALRDGDVHGGPGRLSNVVFMGMGEPLANYKRVVAAVRRITSPAPDGLGLSQRSVTVSTVGLAPAIRKLADEDLSVTLAVSLHTPDDELRDTLVPVNNRWSVAEVLDAARYYADKSGRRVSIEYALIRDVNDQPWRADMLGKKLRKALGPLVHVNLIPLNPTPGSEWDASPKPVEKEFVRRVLAQGVSCTVRDTRGQEIAAACGQLAAEN.

Glutamate 108 acts as the Proton acceptor in catalysis. In terms of domain architecture, Radical SAM core spans 114–351 (YPDRATLCIS…LAQGVSCTVR (238 aa)). Cysteines 121 and 362 form a disulfide. Residues cysteine 128, cysteine 132, and cysteine 135 each contribute to the [4Fe-4S] cluster site. S-adenosyl-L-methionine is bound by residues 183-184 (GE), serine 217, 240-242 (SLH), and asparagine 319. The active-site S-methylcysteine intermediate is cysteine 362.

Belongs to the radical SAM superfamily. RlmN family. The cofactor is [4Fe-4S] cluster.

The protein resides in the cytoplasm. It catalyses the reaction adenosine(2503) in 23S rRNA + 2 reduced [2Fe-2S]-[ferredoxin] + 2 S-adenosyl-L-methionine = 2-methyladenosine(2503) in 23S rRNA + 5'-deoxyadenosine + L-methionine + 2 oxidized [2Fe-2S]-[ferredoxin] + S-adenosyl-L-homocysteine. The enzyme catalyses adenosine(37) in tRNA + 2 reduced [2Fe-2S]-[ferredoxin] + 2 S-adenosyl-L-methionine = 2-methyladenosine(37) in tRNA + 5'-deoxyadenosine + L-methionine + 2 oxidized [2Fe-2S]-[ferredoxin] + S-adenosyl-L-homocysteine. Specifically methylates position 2 of adenine 2503 in 23S rRNA and position 2 of adenine 37 in tRNAs. The sequence is that of Probable dual-specificity RNA methyltransferase RlmN from Rhodococcus opacus (strain B4).